The primary structure comprises 407 residues: Arylacetamide deacetylase-like 3 (407 aa).

The Involved in the stabilization of the negatively charged intermediate by the formation of the oxyanion hole signature appears at 119–121 (HGG). Catalysis depends on residues serine 193, aspartate 347, and histidine 377.

Belongs to the 'GDXG' lipolytic enzyme family.

The polypeptide is Arylacetamide deacetylase-like 3 (AADACL3) (Homo sapiens (Human)).